A 94-amino-acid polypeptide reads, in one-letter code: Small ribosomal subunit protein uS19 (94 aa).

Belongs to the universal ribosomal protein uS19 family.

In terms of biological role, protein S19 forms a complex with S13 that binds strongly to the 16S ribosomal RNA. The chain is Small ribosomal subunit protein uS19 from Wolbachia pipientis wMel.